A 346-amino-acid polypeptide reads, in one-letter code: Glycerol-1-phosphate dehydrogenase [NAD(P)+] (346 aa).

Residues 93 to 97 (GSIID) and 115 to 118 (TTAS) each bind NAD(+). D120 provides a ligand contact to substrate. Residue S124 coordinates NAD(+). D167 serves as a coordination point for substrate. Positions 167 and 247 each coordinate Zn(2+). H251 contributes to the substrate binding site. H263 is a Zn(2+) binding site.

The protein belongs to the glycerol-1-phosphate dehydrogenase family. The cofactor is Zn(2+).

It localises to the cytoplasm. The catalysed reaction is sn-glycerol 1-phosphate + NAD(+) = dihydroxyacetone phosphate + NADH + H(+). It carries out the reaction sn-glycerol 1-phosphate + NADP(+) = dihydroxyacetone phosphate + NADPH + H(+). The protein operates within membrane lipid metabolism; glycerophospholipid metabolism. In terms of biological role, catalyzes the NAD(P)H-dependent reduction of dihydroxyacetonephosphate (DHAP or glycerone phosphate) to glycerol 1-phosphate (G1P). The G1P thus generated is used as the glycerophosphate backbone of phospholipids in the cellular membranes of Archaea. This Pyrococcus abyssi (strain GE5 / Orsay) protein is Glycerol-1-phosphate dehydrogenase [NAD(P)+].